Reading from the N-terminus, the 123-residue chain is Small ribosomal subunit protein uS12 (123 aa).

The interval Met1 to Gln25 is disordered. Position 90 is a 3-methylthioaspartic acid (Asp90).

The protein belongs to the universal ribosomal protein uS12 family. In terms of assembly, part of the 30S ribosomal subunit. Contacts proteins S8 and S17. May interact with IF1 in the 30S initiation complex.

In terms of biological role, with S4 and S5 plays an important role in translational accuracy. Interacts with and stabilizes bases of the 16S rRNA that are involved in tRNA selection in the A site and with the mRNA backbone. Located at the interface of the 30S and 50S subunits, it traverses the body of the 30S subunit contacting proteins on the other side and probably holding the rRNA structure together. The combined cluster of proteins S8, S12 and S17 appears to hold together the shoulder and platform of the 30S subunit. This is Small ribosomal subunit protein uS12 from Ehrlichia canis (strain Jake).